Consider the following 247-residue polypeptide: Complement C1q subcomponent subunit A (247 aa).

A signal peptide spans 1–24; that stretch reads MEAPRGWLVIMISVLAVSLASSAA. A disordered region spans residues 26–116; the sequence is DTCRDLDGRD…NPGNIKDQRR (91 aa). Over residues 27–38 the composition is skewed to basic and acidic residues; it reads TCRDLDGRDGAA. The region spanning 33–111 is the Collagen-like domain; the sequence is GRDGAARKPG…KGIKGNPGNI (79 aa). Residues Pro41 and Pro47 each carry the 4-hydroxyproline modification. Lys50 carries the post-translational modification 5-hydroxylysine. O-linked (Gal...) hydroxylysine glycosylation is present at Lys50. 4-hydroxyproline is present on residues Pro56 and Pro59. Lys69 carries the post-translational modification 5-hydroxylysine. Lys69 carries an O-linked (Gal...) hydroxylysine glycan. 2 positions are modified to 4-hydroxyproline: Pro81 and Pro87. The span at 98-109 shows a compositional bias: low complexity; that stretch reads LPGLKGIKGNPG. Residue Lys102 is modified to 5-hydroxylysine. The O-linked (Gal...) hydroxylysine glycan is linked to Lys102. One can recognise a C1q domain in the interval 112-247; the sequence is KDQRRPAFSA…FSGFLIFPST (136 aa). Cysteines 174 and 192 form a disulfide. Gln201 is a Ca(2+) binding site.

In terms of assembly, core component of the complement C1 complex, a calcium-dependent complex composed of 1 molecule of the C1Q subcomplex, 2 molecules of C1R and 2 molecules of C1S. The C1Q subcomplex is composed 18 subunits: 3 chains of C1QA, C1QB, and C1QC trimerize to form 6 collagen-like triple helices connected to six globular ligand-recognition modules (C1q domain). Interacts with CR1 (via Sushi 24 and Sushi 25 domains). Interacts (via C-terminus) with CD33; this interaction activates CD33 inhibitory motifs. Post-translationally, O-linked glycans are assumed to be the Glc-Gal disaccharides typically found as secondary modifications of hydroxylated lysines in collagen-like domains.

Its subcellular location is the secreted. The protein resides in the cell surface. The C1Q subcomplex is inhibited by sulfated molecules, such as triterpenoid sulfates, heparan sulfate, or chondroitin sulfates. In terms of biological role, core component of the complement C1 complex, a multiprotein complex that initiates the classical pathway of the complement system, a cascade of proteins that leads to phagocytosis and breakdown of pathogens and signaling that strengthens the adaptive immune system. The classical complement pathway is initiated by the C1Q subcomplex of the C1 complex, which specifically binds IgG or IgM immunoglobulins complexed with antigens, forming antigen-antibody complexes on the surface of pathogens: C1QA, together with C1QB and C1QC, specifically recognizes and binds the Fc regions of IgG or IgM via its C1q domain. Immunoglobulin-binding activates the proenzyme C1R, which cleaves C1S, initiating the proteolytic cascade of the complement system. The C1Q subcomplex is activated by a hexamer of IgG complexed with antigens, while it is activated by a pentameric IgM. The C1Q subcomplex also recognizes and binds phosphatidylserine exposed on the surface of cells undergoing programmed cell death, possibly promoting activation of the complement system. This is Complement C1q subcomponent subunit A (C1QA) from Sus scrofa (Pig).